The primary structure comprises 249 residues: Large ribosomal subunit protein uL16m (249 aa).

This sequence belongs to the universal ribosomal protein uL16 family. As to quaternary structure, component of the mitochondrial large ribosomal subunit (mt-LSU). Mature N.crassa 74S mitochondrial ribosomes consist of a small (37S) and a large (54S) subunit. The 37S small subunit contains a 16S ribosomal RNA (16S mt-rRNA) and 32 different proteins. The 54S large subunit contains a 23S rRNA (23S mt-rRNA) and 42 different proteins.

Its subcellular location is the mitochondrion. Component of the mitochondrial ribosome (mitoribosome), a dedicated translation machinery responsible for the synthesis of mitochondrial genome-encoded proteins, including at least some of the essential transmembrane subunits of the mitochondrial respiratory chain. The mitoribosomes are attached to the mitochondrial inner membrane and translation products are cotranslationally integrated into the membrane. This Neurospora crassa (strain ATCC 24698 / 74-OR23-1A / CBS 708.71 / DSM 1257 / FGSC 987) protein is Large ribosomal subunit protein uL16m (mrpl16).